The following is a 219-amino-acid chain: Proteasome subunit beta type-9 (219 aa).

Residues Met-1 to Gly-20 constitute a propeptide, removed in mature form. The active-site Nucleophile is the Thr-21. Residues Lys-53 and Lys-109 each carry the N6-acetyllysine modification.

Belongs to the peptidase T1B family. The 26S proteasome consists of a 20S proteasome core and two 19S regulatory subunits. The 20S proteasome core is composed of 28 subunits that are arranged in four stacked rings, resulting in a barrel-shaped structure. The two end rings are each formed by seven alpha subunits, and the two central rings are each formed by seven beta subunits. The catalytic chamber with the active sites is on the inside of the barrel. Component of the immunoproteasome, where it displaces the equivalent housekeeping subunit PSMB6. Component of the spermatoproteasome, a form of the proteasome specifically found in testis. In terms of processing, autocleaved. The resulting N-terminal Thr residue of the mature subunit is responsible for the nucleophile proteolytic activity.

The protein localises to the cytoplasm. It is found in the nucleus. It carries out the reaction Cleavage of peptide bonds with very broad specificity.. Functionally, the proteasome is a multicatalytic proteinase complex which is characterized by its ability to cleave peptides with Arg, Phe, Tyr, Leu, and Glu adjacent to the leaving group at neutral or slightly basic pH. The proteasome has an ATP-dependent proteolytic activity. This subunit is involved in antigen processing to generate class I binding peptides. The sequence is that of Proteasome subunit beta type-9 (Psmb9) from Mus platythrix (Flat-haired mouse).